A 238-amino-acid chain; its full sequence is tRNA1(Val) (adenine(37)-N6)-methyltransferase (238 aa).

It belongs to the methyltransferase superfamily. tRNA (adenine-N(6)-)-methyltransferase family.

The protein resides in the cytoplasm. It catalyses the reaction adenosine(37) in tRNA1(Val) + S-adenosyl-L-methionine = N(6)-methyladenosine(37) in tRNA1(Val) + S-adenosyl-L-homocysteine + H(+). Specifically methylates the adenine in position 37 of tRNA(1)(Val) (anticodon cmo5UAC). The chain is tRNA1(Val) (adenine(37)-N6)-methyltransferase from Shewanella baltica (strain OS185).